We begin with the raw amino-acid sequence, 350 residues long: 3-dehydroquinate synthase (350 aa).

NAD(+) contacts are provided by residues 106–110 (GVIGD), 130–131 (TS), Lys143, and Lys152. Zn(2+)-binding residues include Glu185, His246, and His263.

This sequence belongs to the sugar phosphate cyclases superfamily. Dehydroquinate synthase family. Requires Co(2+) as cofactor. Zn(2+) serves as cofactor. The cofactor is NAD(+).

It localises to the cytoplasm. It carries out the reaction 7-phospho-2-dehydro-3-deoxy-D-arabino-heptonate = 3-dehydroquinate + phosphate. The protein operates within metabolic intermediate biosynthesis; chorismate biosynthesis; chorismate from D-erythrose 4-phosphate and phosphoenolpyruvate: step 2/7. In terms of biological role, catalyzes the conversion of 3-deoxy-D-arabino-heptulosonate 7-phosphate (DAHP) to dehydroquinate (DHQ). This is 3-dehydroquinate synthase from Clostridium beijerinckii (strain ATCC 51743 / NCIMB 8052) (Clostridium acetobutylicum).